We begin with the raw amino-acid sequence, 415 residues long: Phosphoglycerate kinase (415 aa).

Substrate contacts are provided by residues 27-29 (DIN), Arg44, 67-70 (HQGR), Arg124, and Arg164. ATP-binding positions include Glu336 and 362 to 365 (GGHM).

Belongs to the phosphoglycerate kinase family. As to quaternary structure, monomer.

The protein resides in the cytoplasm. It carries out the reaction (2R)-3-phosphoglycerate + ATP = (2R)-3-phospho-glyceroyl phosphate + ADP. Its pathway is carbohydrate degradation; glycolysis; pyruvate from D-glyceraldehyde 3-phosphate: step 2/5. The protein is Phosphoglycerate kinase of Sulfurisphaera tokodaii (strain DSM 16993 / JCM 10545 / NBRC 100140 / 7) (Sulfolobus tokodaii).